Reading from the N-terminus, the 334-residue chain is Leucine-rich repeat-containing protein 26 (334 aa).

The N-terminal stretch at 1–26 (MRGPSWSRPRPLLLLLLLLSPWPVWA) is a signal peptide. Over 27–261 (QVSATASPSG…HCAQPLALRD (235 aa)) the chain is Extracellular. The LRRNT domain occupies 34 to 71 (PSGSLGAPDCPEVCTCVPGGLASCSALSLPAVPPGLSL). Disulfide bonds link Cys43/Cys49 and Cys47/Cys57. 5 LRR repeats span residues 72 to 93 (RLRALLLDHNRVRALPPGAFAG), 96 to 117 (ALQRLDLRENGLHSVHVRAFWG), 120 to 141 (ALQLLDLSANQLEALAPGTFAP), 144 to 167 (ALRNLSLAGNRLARLEPAALGALP), and 168 to 190 (LLRSLSLQDNELAALAPGLLGRL). A glycan (N-linked (GlcNAc...) asparagine) is linked at Asn147. An LRRCT domain is found at 201–255 (NPWGCGCALRPLCAWLRRHPLPASEAETVLCVWPGRLTLSPLTAFSDAAFSHCAQ). Cystine bridges form between Cys205/Cys231 and Cys207/Cys253. Residues 262–282 (LAVVYTLGPASFLVSLASCLA) traverse the membrane as a helical segment. Topologically, residues 283-334 (LGSGLTACRARRRRLRTAALRPPRPPDPNPDPDPHGCASPADPGSPAAAAQA) are cytoplasmic. A disordered region spans residues 298-334 (RTAALRPPRPPDPNPDPDPHGCASPADPGSPAAAAQA). Residues 304–313 (PPRPPDPNPD) are compositionally biased toward pro residues. The segment covering 320–334 (ASPADPGSPAAAAQA) has biased composition (low complexity).

Interacts with KCNMA1. As to expression, isoform 1 is expressed highly in normal prostate and salivary gland, very weakly in colon, pancreas, and intestine, and not at all in other tissues. Isoform 1 is expressed highly in many cancer cell lines and in breast cancer, pancreatic cancer and colon cancer. Isoform 2 is expressed in cancer cell lines.

It is found in the cell membrane. It localises to the cytoplasm. The protein resides in the cytoskeleton. Functionally, auxiliary protein of the large-conductance, voltage and calcium-activated potassium channel (BK alpha). Required for the conversion of BK alpha channels from a high-voltage to a low-voltage activated channel type in non-excitable cells. These are characterized by negative membrane voltages and constant low levels of calcium. The chain is Leucine-rich repeat-containing protein 26 (LRRC26) from Homo sapiens (Human).